A 271-amino-acid chain; its full sequence is Aminodeoxychorismate lyase (271 aa).

Lys140 bears the N6-(pyridoxal phosphate)lysine mark.

The protein belongs to the class-IV pyridoxal-phosphate-dependent aminotransferase family. As to quaternary structure, homodimer. The cofactor is pyridoxal 5'-phosphate.

The enzyme catalyses 4-amino-4-deoxychorismate = 4-aminobenzoate + pyruvate + H(+). The protein operates within cofactor biosynthesis; tetrahydrofolate biosynthesis; 4-aminobenzoate from chorismate: step 2/2. In terms of biological role, involved in the biosynthesis of p-aminobenzoate (PABA), a precursor of tetrahydrofolate. Converts 4-amino-4-deoxychorismate into 4-aminobenzoate (PABA) and pyruvate. The sequence is that of Aminodeoxychorismate lyase (pabC) from Vibrio harveyi (Beneckea harveyi).